The sequence spans 288 residues: MKLQFTKMHGAGNDFVVLDGIHQKLDLTTEQWRALASRHFGVGADQMLIVEKPTREDVDFRYRIFNADGSEVEHCGNGARCFVRFVTDKGMTDKRSVRVEVMNGVITLTLQDDGQVTVDMGAPELEPARVPFRPDGLPVRTQGEDIAYGLEINGRTAWISPVSMGNPHAVQVVDDVENFPVLQDGPLIEHHATFPNRVNAGFLQVVDRHTARLRVFERGAGETLACGTGACAAVVAGIRRGLLDSPVKVHTHGGDLNIAWDGGAEPVRMTGPATTVFEGTIDLAALPA.

Substrate-binding residues include Asn13, Gln46, and Asn66. The active-site Proton donor is Cys75. Residues Gly76–Asn77, Asn166, Asn199, and Glu217–Arg218 each bind substrate. The active-site Proton acceptor is the Cys226. Gly227–Thr228 provides a ligand contact to substrate.

The protein belongs to the diaminopimelate epimerase family. As to quaternary structure, homodimer.

The protein localises to the cytoplasm. It catalyses the reaction (2S,6S)-2,6-diaminopimelate = meso-2,6-diaminopimelate. The protein operates within amino-acid biosynthesis; L-lysine biosynthesis via DAP pathway; DL-2,6-diaminopimelate from LL-2,6-diaminopimelate: step 1/1. Its function is as follows. Catalyzes the stereoinversion of LL-2,6-diaminopimelate (L,L-DAP) to meso-diaminopimelate (meso-DAP), a precursor of L-lysine and an essential component of the bacterial peptidoglycan. This chain is Diaminopimelate epimerase, found in Cupriavidus pinatubonensis (strain JMP 134 / LMG 1197) (Cupriavidus necator (strain JMP 134)).